A 1320-amino-acid chain; its full sequence is MSHSKKSLFAAYSNDDDGDGDGDDLYLEEHQKVTSTNTPSSSWFSNSSYKEKQENVIDTVTSKTQLKRASDFFNLDSDNTFSSPPPPSSSPPLYSKTEKKNNDKVKIIMKKRSFIDSSSDDNSDDDDNDSSSSDQDSSDDDSGGFTYNRKKYKKEQQQQENEENEENERKNRKKEKKKKRKDKKFKNDDKSMMIISNENSENYSDNSSYFIEKTGDKVFSSRTSTPNYNYDNSFILGMSDYKIGFSKKEGYQIEPISLTSFNKQQINNRYFTKPSSSSSSSSQSQQQLITVITKRKEIEEIEKVKPISNIKDPSKSNDDEIKLIVLNENNHDNDDDDNDDDDNETLERKTLKKNSELNKLVEQYPNNIEYWIDLVKFQENFQQFSRNVNKSKTSMYEKQLSIYRNSLLHNPDSEILTIEYLKLASKLWDQQKVLDLWNKVLSSSSSSSSSSIISEKLWKEYIEFCLSNFNDFKIEKIKETIITIIRKMLVKRRSFKVKDYNFMENISNLEESILQFISQLSKLLNQAGFSERVIGIYQSLIEFNCFEPIQLSNETQATLLKEFKSYWSSLDYPKIGNPNSIGWSKSFTILLNNSINNNNNKNNNNNNNNNNNNNNNNNNNNNNNNNNNNNNNNNNNNNNNMDLDNLDNLSIEEIEKLLKEQEDQENQDNENIFNITHKSKDLNEDDDNENNNNNQEEQEDNDSNSNDNDNNNNKFNTWGKKEIELDELKWKPLDINNNLEVNKEVNENDTERVVLFNDFYELLFRFVKEENKLELVFQFLEFLGVPISLLDDKIQPRYSFYHPQRRDSINSIHNENIISLLFKDLKQQPSPPSPSPEYPNWFKTFDKFSNNNNNSQNLLGLSDDKIKFIDSIYKLILENSNGIKLKEKLYVSYIMFKASIDINDAKVYTKSLCEKFKNLIYFDIFASLELKSGKTQQARTIYQTTCFYINQLINQQAQQQQQQLQIDLVYREYLFMELNLIYQTIEKDPQILKRFIKSNHKPIELFFTPLHILQCYLDGNYKQYSSSTFNLNTINQFLNQLNLKFLQKLQQQQQQQQQNSSSSSSSSSSSSSSSSSSSSSVDFLLCYCIFELLSNGFDGFLILFKRITSSSTNDYLKIFSIQHELLTIRCIDMVTKIAPLIGTDPKRIKNLIIDSLNQYYDHPKLLSLFLNWESKNQLINRIRIYFDLNSINNINNNNGGDDGGSSIFWLFAIKFESNRIGAAQRIKSLFEKAISTTQKHNIIFWKLYIEFEINRGRLKIAKSIYYRSIKQLPFSKQIWLLPFTNSKLSLIFNNQEFNEIINLINEKGIRLRILTPKVSN.

2 disordered regions span residues 1–55 (MSHS…KQEN) and 74–203 (NLDS…SENY). The segment covering 14-26 (NDDDGDGDGDDLY) has biased composition (acidic residues). The segment covering 34 to 48 (TSTNTPSSSWFSNSS) has biased composition (low complexity). The segment covering 96–106 (KTEKKNNDKVK) has biased composition (basic and acidic residues). Residues 118-129 (SSDDNSDDDDND) show a composition bias toward acidic residues. A coiled-coil region spans residues 146–186 (TYNRKKYKKEQQQQENEENEENERKNRKKEKKKKRKDKKFK). Basic residues predominate over residues 170-184 (KNRKKEKKKKRKDKK). 2 HAT repeats span residues 348–380 (RKTL…FQEN) and 428–467 (WDQQ…FCLS). Residues 591–699 (LNNSINNNNN…NNNNNQEEQE (109 aa)) are a coiled coil. Low complexity-rich tracts occupy residues 598 to 640 (NNNK…NNNN) and 703 to 713 (SNSNDNDNNNN). Disordered regions lie at residues 598 to 644 (NNNK…MDLD) and 676 to 716 (THKS…NKFN). Residues 864-899 (DKIKFIDSIYKLILENSNGIKLKEKLYVSYIMFKAS) form an HAT 3 repeat. The segment at 1056-1078 (QQQNSSSSSSSSSSSSSSSSSSS) is disordered. 2 HAT repeats span residues 1221-1254 (GAAQ…FEIN) and 1256-1288 (GRLK…NSKL).

Belongs to the NRDE2 family.

Its subcellular location is the nucleus speckle. Functionally, protein of the nuclear speckles that regulates RNA exosomal degradation. The polypeptide is Nuclear exosome regulator NRDE2 (nrde2) (Dictyostelium discoideum (Social amoeba)).